The following is a 187-amino-acid chain: Threonylcarbamoyl-AMP synthase (187 aa).

The YrdC-like domain occupies 4–187; that stretch reads NHTDDPFLLD…GHSGQTIRDN (184 aa). The segment at 168-187 is disordered; that stretch reads GSRSPSKIRHGHSGQTIRDN.

The protein belongs to the SUA5 family. TsaC subfamily.

The protein localises to the cytoplasm. The catalysed reaction is L-threonine + hydrogencarbonate + ATP = L-threonylcarbamoyladenylate + diphosphate + H2O. Its function is as follows. Required for the formation of a threonylcarbamoyl group on adenosine at position 37 (t(6)A37) in tRNAs that read codons beginning with adenine. Catalyzes the conversion of L-threonine, HCO(3)(-)/CO(2) and ATP to give threonylcarbamoyl-AMP (TC-AMP) as the acyladenylate intermediate, with the release of diphosphate. The sequence is that of Threonylcarbamoyl-AMP synthase from Pseudoalteromonas atlantica (strain T6c / ATCC BAA-1087).